We begin with the raw amino-acid sequence, 92 residues long: MTTKKAYMYVLECADKTLYTGYTTDLKKRLATHNAGKGAKYTRYRLPVSLLYYEVFDSKEAAMSAEALFKKRKTRSQKLAYIATHQKEKKNH.

The GIY-YIG domain maps to 4–80 (KKAYMYVLEC…KRKTRSQKLA (77 aa)).

The protein belongs to the UPF0213 family.

The chain is UPF0213 protein M28_Spy1146 from Streptococcus pyogenes serotype M28 (strain MGAS6180).